The primary structure comprises 284 residues: Bifunctional protein FolD (284 aa).

NADP(+) contacts are provided by residues 166–168 (GAS) and I232.

It belongs to the tetrahydrofolate dehydrogenase/cyclohydrolase family. Homodimer.

It catalyses the reaction (6R)-5,10-methylene-5,6,7,8-tetrahydrofolate + NADP(+) = (6R)-5,10-methenyltetrahydrofolate + NADPH. The catalysed reaction is (6R)-5,10-methenyltetrahydrofolate + H2O = (6R)-10-formyltetrahydrofolate + H(+). The protein operates within one-carbon metabolism; tetrahydrofolate interconversion. Functionally, catalyzes the oxidation of 5,10-methylenetetrahydrofolate to 5,10-methenyltetrahydrofolate and then the hydrolysis of 5,10-methenyltetrahydrofolate to 10-formyltetrahydrofolate. The protein is Bifunctional protein FolD of Stutzerimonas stutzeri (strain A1501) (Pseudomonas stutzeri).